The chain runs to 368 residues: Peptide chain release factor 2 (368 aa).

Glutamine 250 is modified (N5-methylglutamine).

This sequence belongs to the prokaryotic/mitochondrial release factor family. Methylated by PrmC. Methylation increases the termination efficiency of RF2.

It is found in the cytoplasm. Its function is as follows. Peptide chain release factor 2 directs the termination of translation in response to the peptide chain termination codons UGA and UAA. The polypeptide is Peptide chain release factor 2 (Rickettsia conorii (strain ATCC VR-613 / Malish 7)).